A 292-amino-acid chain; its full sequence is Coiled-coil domain-containing protein 192 (292 aa).

Positions 28-55 (SVVPESDTSERSSMTSGSSESDIPQENK) are disordered. Low complexity predominate over residues 38 to 49 (RSSMTSGSSESD). Coiled-coil stretches lie at residues 65 to 174 (QMAF…LATA) and 222 to 258 (IMELSTQVSLQTERITQLKEVLEEKERKIQQLEAERS). The span at 251-267 (QQLEAERSPHPPQEVKD) shows a compositional bias: basic and acidic residues. Positions 251–292 (QQLEAERSPHPPQEVKDPPGCLPEAPVFSTHDIPPVVSDENL) are disordered.

The sequence is that of Coiled-coil domain-containing protein 192 from Homo sapiens (Human).